Here is a 339-residue protein sequence, read N- to C-terminus: mRNA cap guanine-N(7) methyltransferase 2 (339 aa).

The region spanning 1–277 (MAVTPHHRLY…LYSTFVFQKP (277 aa)) is the mRNA cap 0 methyltransferase domain. Residues K14, D54, and 82-83 (DP) each bind S-adenosyl-L-methionine. The segment at 314 to 339 (VSRTDILPPADNEKGILGPGPADMRL) is disordered.

Belongs to the class I-like SAM-binding methyltransferase superfamily. mRNA cap 0 methyltransferase family.

The protein resides in the nucleus. It catalyses the reaction a 5'-end (5'-triphosphoguanosine)-ribonucleoside in mRNA + S-adenosyl-L-methionine = a 5'-end (N(7)-methyl 5'-triphosphoguanosine)-ribonucleoside in mRNA + S-adenosyl-L-homocysteine. MRNA-capping methyltransferase that methylates the N7 position of the added guanosine to the 5'-cap structure of mRNAs. Binds RNA containing 5'-terminal GpppC. The protein is mRNA cap guanine-N(7) methyltransferase 2 of Oryza sativa subsp. japonica (Rice).